The sequence spans 381 residues: Protein COS6 (381 aa).

Topologically, residues 1-42 (MKENELKNEKSVDVLSVKQLESQKTVLPQDLFRSSFTWFCYE) are cytoplasmic. The helical transmembrane segment at 43-63 (IYKSLVFRIWMLLWLPLSVWW) threads the bilayer. Topologically, residues 64–69 (KLSNNW) are extracellular. Residues 70–90 (IYPLMVSLLVLFWGPVFVLVI) traverse the membrane as a helical segment. The Cytoplasmic segment spans residues 91–381 (FRLSRKRSLS…QLSCSEESLA (291 aa)).

The protein belongs to the DUP/COS family.

The protein localises to the membrane. The polypeptide is Protein COS6 (COS6) (Saccharomyces cerevisiae (strain ATCC 204508 / S288c) (Baker's yeast)).